Here is a 236-residue protein sequence, read N- to C-terminus: Segregation and condensation protein A (236 aa).

The protein belongs to the ScpA family. As to quaternary structure, component of a cohesin-like complex composed of ScpA, ScpB and the Smc homodimer, in which ScpA and ScpB bind to the head domain of Smc. The presence of the three proteins is required for the association of the complex with DNA.

The protein resides in the cytoplasm. Participates in chromosomal partition during cell division. May act via the formation of a condensin-like complex containing Smc and ScpB that pull DNA away from mid-cell into both cell halves. The chain is Segregation and condensation protein A from Streptococcus sanguinis (strain SK36).